We begin with the raw amino-acid sequence, 210 residues long: Type III pantothenate kinase (210 aa).

Residue 5-12 participates in ATP binding; it reads DIGNTYLH. Residues tyrosine 69 and 73–76 contribute to the substrate site; that span reads GVDR. Residue aspartate 75 is the Proton acceptor of the active site. Residue aspartate 90 coordinates K(+). Serine 93 is an ATP binding site. Threonine 145 contributes to the substrate binding site.

The protein belongs to the type III pantothenate kinase family. Homodimer. Requires NH4(+) as cofactor. It depends on K(+) as a cofactor.

It is found in the cytoplasm. It catalyses the reaction (R)-pantothenate + ATP = (R)-4'-phosphopantothenate + ADP + H(+). It participates in cofactor biosynthesis; coenzyme A biosynthesis; CoA from (R)-pantothenate: step 1/5. Catalyzes the phosphorylation of pantothenate (Pan), the first step in CoA biosynthesis. This chain is Type III pantothenate kinase, found in Wolinella succinogenes (strain ATCC 29543 / DSM 1740 / CCUG 13145 / JCM 31913 / LMG 7466 / NCTC 11488 / FDC 602W) (Vibrio succinogenes).